A 623-amino-acid chain; its full sequence is Glutathione import ATP-binding protein GsiA (623 aa).

ABC transporter domains are found at residues 15–269 (VENL…RALL) and 314–564 (LRVR…RKLL). ATP-binding positions include 49-56 (GESGSGKS) and 357-364 (GESGSGKS).

This sequence belongs to the ABC transporter superfamily. Glutathione importer (TC 3.A.1.5.11) family. The complex is composed of two ATP-binding proteins (GsiA), two transmembrane proteins (GsiC and GsiD) and a solute-binding protein (GsiB).

It is found in the cell inner membrane. It catalyses the reaction glutathione(out) + ATP + H2O = glutathione(in) + ADP + phosphate + H(+). Part of the ABC transporter complex GsiABCD involved in glutathione import. Responsible for energy coupling to the transport system. This Escherichia coli O157:H7 protein is Glutathione import ATP-binding protein GsiA.